The sequence spans 348 residues: UDP-3-O-acylglucosamine N-acyltransferase (348 aa).

Residue H241 is the Proton acceptor of the active site.

The protein belongs to the transferase hexapeptide repeat family. LpxD subfamily. As to quaternary structure, homotrimer.

It carries out the reaction a UDP-3-O-[(3R)-3-hydroxyacyl]-alpha-D-glucosamine + a (3R)-hydroxyacyl-[ACP] = a UDP-2-N,3-O-bis[(3R)-3-hydroxyacyl]-alpha-D-glucosamine + holo-[ACP] + H(+). Its pathway is bacterial outer membrane biogenesis; LPS lipid A biosynthesis. Its function is as follows. Catalyzes the N-acylation of UDP-3-O-acylglucosamine using 3-hydroxyacyl-ACP as the acyl donor. Is involved in the biosynthesis of lipid A, a phosphorylated glycolipid that anchors the lipopolysaccharide to the outer membrane of the cell. The polypeptide is UDP-3-O-acylglucosamine N-acyltransferase (Neisseria meningitidis serogroup B (strain ATCC BAA-335 / MC58)).